Reading from the N-terminus, the 510-residue chain is Propionyl-CoA carboxylase beta chain (510 aa).

Positions 1–257 (MKDILEQLED…NNREKPPVRP (257 aa)) constitute a CoA carboxyltransferase N-terminal domain. The carboxyltransferase stretch occupies residues 1 to 504 (MKDILEQLED…NKSVQMPWKK (504 aa)). The 244-residue stretch at 261–504 (DPDRIEPSLD…NKSVQMPWKK (244 aa)) folds into the CoA carboxyltransferase C-terminal domain. Residues 292-325 (DEGDFYEIQEEFAKNIITGFIRLEGRTVGVVANQ) form an acyl-CoA binding region.

This sequence belongs to the AccD/PCCB family. As to quaternary structure, the holoenzyme is a dodecamer composed of 6 PccA/alpha subunits and 6 PccB/beta subunits.

The enzyme catalyses propanoyl-CoA + hydrogencarbonate + ATP = (S)-methylmalonyl-CoA + ADP + phosphate + H(+). It participates in metabolic intermediate metabolism; propanoyl-CoA degradation; succinyl-CoA from propanoyl-CoA: step 1/3. Its function is as follows. This is one of the 2 subunits of the biotin-dependent propionyl-CoA carboxylase (PCC), the enzyme catalyzing the carboxylation of propionyl-CoA/propanoyl-CoA to D-methylmalonyl-CoA/(S)-methylmalonyl-CoA. Within the holoenzyme, the alpha subunit catalyzes the ATP-dependent carboxylation of the biotin carried by the biotin carboxyl carrier (BCC) domain, while the beta subunit then tranfers the carboxyl group from carboxylated biotin to propionyl-CoA. In Roseobacter denitrificans (strain ATCC 33942 / OCh 114) (Erythrobacter sp. (strain OCh 114)), this protein is Propionyl-CoA carboxylase beta chain.